We begin with the raw amino-acid sequence, 1279 residues long: ATP-dependent helicase/nuclease subunit A (1279 aa).

Residues Thr-4–Arg-499 form the UvrD-like helicase ATP-binding domain. Ala-25 to Thr-32 serves as a coordination point for ATP. Residues Glu-526–Gly-853 enclose the UvrD-like helicase C-terminal domain.

Belongs to the helicase family. AddA subfamily. In terms of assembly, heterodimer of AddA and AddB/RexB. Mg(2+) is required as a cofactor.

The catalysed reaction is Couples ATP hydrolysis with the unwinding of duplex DNA by translocating in the 3'-5' direction.. It carries out the reaction ATP + H2O = ADP + phosphate + H(+). Functionally, the heterodimer acts as both an ATP-dependent DNA helicase and an ATP-dependent, dual-direction single-stranded exonuclease. Recognizes the chi site generating a DNA molecule suitable for the initiation of homologous recombination. The AddA nuclease domain is required for chi fragment generation; this subunit has the helicase and 3' -&gt; 5' nuclease activities. This Clostridium botulinum (strain Hall / ATCC 3502 / NCTC 13319 / Type A) protein is ATP-dependent helicase/nuclease subunit A.